Reading from the N-terminus, the 194-residue chain is Imidazoleglycerol-phosphate dehydratase (194 aa).

The protein belongs to the imidazoleglycerol-phosphate dehydratase family.

Its subcellular location is the cytoplasm. The enzyme catalyses D-erythro-1-(imidazol-4-yl)glycerol 3-phosphate = 3-(imidazol-4-yl)-2-oxopropyl phosphate + H2O. It participates in amino-acid biosynthesis; L-histidine biosynthesis; L-histidine from 5-phospho-alpha-D-ribose 1-diphosphate: step 6/9. This Sulfurisphaera tokodaii (strain DSM 16993 / JCM 10545 / NBRC 100140 / 7) (Sulfolobus tokodaii) protein is Imidazoleglycerol-phosphate dehydratase.